The primary structure comprises 131 residues: Holo-[acyl-carrier-protein] synthase (131 aa).

Mg(2+) contacts are provided by aspartate 8 and glutamate 59.

This sequence belongs to the P-Pant transferase superfamily. AcpS family. The cofactor is Mg(2+).

It localises to the cytoplasm. It carries out the reaction apo-[ACP] + CoA = holo-[ACP] + adenosine 3',5'-bisphosphate + H(+). In terms of biological role, transfers the 4'-phosphopantetheine moiety from coenzyme A to a Ser of acyl-carrier-protein. The polypeptide is Holo-[acyl-carrier-protein] synthase (Rickettsia massiliae (strain Mtu5)).